The sequence spans 336 residues: Ornithine carbamoyltransferase, catabolic (336 aa).

Carbamoyl phosphate is bound by residues 57-60, Gln-84, Arg-108, and 135-138; these read STRT and HPTQ. L-ornithine contacts are provided by residues Asn-168, Asp-232, and 236–237; that span reads SM. Residues 274–275 and Arg-321 contribute to the carbamoyl phosphate site; that span reads CL.

This sequence belongs to the aspartate/ornithine carbamoyltransferase superfamily. OTCase family.

It is found in the cytoplasm. The catalysed reaction is carbamoyl phosphate + L-ornithine = L-citrulline + phosphate + H(+). It functions in the pathway amino-acid degradation; L-arginine degradation via ADI pathway; carbamoyl phosphate from L-arginine: step 2/2. Reversibly catalyzes the transfer of the carbamoyl group from carbamoyl phosphate (CP) to the N(epsilon) atom of ornithine (ORN) to produce L-citrulline. In Burkholderia pseudomallei (strain K96243), this protein is Ornithine carbamoyltransferase, catabolic.